Reading from the N-terminus, the 416-residue chain is CinA-like protein (416 aa).

This sequence belongs to the CinA family.

This chain is CinA-like protein, found in Thermosynechococcus vestitus (strain NIES-2133 / IAM M-273 / BP-1).